Here is a 365-residue protein sequence, read N- to C-terminus: NADH-quinone oxidoreductase subunit H (365 aa).

A run of 8 helical transmembrane segments spans residues Leu-27–Ala-47, Phe-99–Val-119, Ala-133–Trp-153, Ala-168–Met-188, Phe-206–Val-226, Ile-268–Ile-288, Ile-294–Phe-314, and Leu-329–Met-349.

Belongs to the complex I subunit 1 family. NDH-1 is composed of 14 different subunits. Subunits NuoA, H, J, K, L, M, N constitute the membrane sector of the complex.

Its subcellular location is the cell inner membrane. The catalysed reaction is a quinone + NADH + 5 H(+)(in) = a quinol + NAD(+) + 4 H(+)(out). Its function is as follows. NDH-1 shuttles electrons from NADH, via FMN and iron-sulfur (Fe-S) centers, to quinones in the respiratory chain. The immediate electron acceptor for the enzyme in this species is believed to be ubiquinone. Couples the redox reaction to proton translocation (for every two electrons transferred, four hydrogen ions are translocated across the cytoplasmic membrane), and thus conserves the redox energy in a proton gradient. This subunit may bind ubiquinone. The protein is NADH-quinone oxidoreductase subunit H of Nitrosomonas eutropha (strain DSM 101675 / C91 / Nm57).